Reading from the N-terminus, the 532-residue chain is Flavin-containing monooxygenase 1 (532 aa).

Ala2 carries the post-translational modification N-acetylalanine. Topologically, residues 2-510 (AKRVAIVGAG…ARVVQESPSP (509 aa)) are lumenal. Residues 9 to 13 (GAGVS), Glu32, 40 to 41 (LW), and 61 to 62 (NS) each bind FAD. Residues 60–61 (SN) and 195–198 (SGTD) each bind NADP(+). The helical transmembrane segment at 511–531 (FESFLKVFSFLALLVAIFLIF) threads the bilayer. A topological domain (cytoplasmic) is located at residue Leu532.

The protein belongs to the FMO family. It depends on FAD as a cofactor. Expressed mainly in fetal and adult liver.

It localises to the endoplasmic reticulum membrane. The enzyme catalyses hypotaurine + NADPH + O2 + H(+) = taurine + NADP(+) + H2O. It catalyses the reaction hypotaurine + NADH + O2 + H(+) = taurine + NAD(+) + H2O. The catalysed reaction is trimethylamine + NADPH + O2 = trimethylamine N-oxide + NADP(+) + H2O. It carries out the reaction N,N-dimethylaniline + NADPH + O2 + H(+) = N,N-dimethylaniline N-oxide + NADP(+) + H2O. Its function is as follows. Broad spectrum monooxygenase that catalyzes the oxygenation of a wide variety of nitrogen- and sulfur-containing compounds including xenobiotics. Catalyzes the S-oxygenation of hypotaurine to produce taurine, an organic osmolyte involved in cell volume regulation as well as a variety of cytoprotective and developmental processes. In vitro, catalyzes the N-oxygenation of trimethylamine (TMA) to produce trimethylamine N-oxide (TMAO) and could therefore participate to the detoxification of this compound that is generated by the action of gut microbiota from dietary precursors such as choline, choline containing compounds, betaine or L-carnitine. The polypeptide is Flavin-containing monooxygenase 1 (Homo sapiens (Human)).